Consider the following 508-residue polypeptide: Pyruvate kinase (508 aa).

Arg56 contributes to the substrate binding site. K(+)-binding residues include Asn58, Ser60, Asp90, and Thr91. 58–61 (NFSH) serves as a coordination point for ATP. Residues Arg97 and Lys185 each contribute to the ATP site. Glu251 lines the Mg(2+) pocket. Residues Gly274, Asp275, and Thr307 each coordinate substrate. A Mg(2+)-binding site is contributed by Asp275.

The protein belongs to the pyruvate kinase family. In terms of assembly, homotetramer. Mg(2+) serves as cofactor. K(+) is required as a cofactor.

It catalyses the reaction pyruvate + ATP = phosphoenolpyruvate + ADP + H(+). The protein operates within carbohydrate degradation; glycolysis; pyruvate from D-glyceraldehyde 3-phosphate: step 5/5. Regulated by phosphoenolpyruvate substrate and is allosterically activated by ribose-5-phosphate, AMP and other nucleoside monophosphates but not by fructose-1,6-bisphosphate. This Mycoplasma genitalium (strain ATCC 33530 / DSM 19775 / NCTC 10195 / G37) (Mycoplasmoides genitalium) protein is Pyruvate kinase (pyk).